The following is a 239-amino-acid chain: Ribosomal RNA large subunit methyltransferase E (239 aa).

The disordered stretch occupies residues 1 to 20; it reads MTKAPIAGNRTGRKLGQRVK. Over residues 11–20 the composition is skewed to basic residues; the sequence is TGRKLGQRVK. 5 residues coordinate S-adenosyl-L-methionine: Gly81, Trp83, Asp104, Asp120, and Asp144. Lys184 acts as the Proton acceptor in catalysis.

Belongs to the class I-like SAM-binding methyltransferase superfamily. RNA methyltransferase RlmE family.

It is found in the cytoplasm. It catalyses the reaction uridine(2552) in 23S rRNA + S-adenosyl-L-methionine = 2'-O-methyluridine(2552) in 23S rRNA + S-adenosyl-L-homocysteine + H(+). Its function is as follows. Specifically methylates the uridine in position 2552 of 23S rRNA at the 2'-O position of the ribose in the fully assembled 50S ribosomal subunit. The chain is Ribosomal RNA large subunit methyltransferase E from Rhizobium johnstonii (strain DSM 114642 / LMG 32736 / 3841) (Rhizobium leguminosarum bv. viciae).